The following is a 569-amino-acid chain: Proline--tRNA ligase (569 aa).

The protein belongs to the class-II aminoacyl-tRNA synthetase family. ProS type 1 subfamily. Homodimer.

The protein localises to the cytoplasm. The catalysed reaction is tRNA(Pro) + L-proline + ATP = L-prolyl-tRNA(Pro) + AMP + diphosphate. Catalyzes the attachment of proline to tRNA(Pro) in a two-step reaction: proline is first activated by ATP to form Pro-AMP and then transferred to the acceptor end of tRNA(Pro). As ProRS can inadvertently accommodate and process non-cognate amino acids such as alanine and cysteine, to avoid such errors it has two additional distinct editing activities against alanine. One activity is designated as 'pretransfer' editing and involves the tRNA(Pro)-independent hydrolysis of activated Ala-AMP. The other activity is designated 'posttransfer' editing and involves deacylation of mischarged Ala-tRNA(Pro). The misacylated Cys-tRNA(Pro) is not edited by ProRS. The sequence is that of Proline--tRNA ligase from Legionella pneumophila subsp. pneumophila (strain Philadelphia 1 / ATCC 33152 / DSM 7513).